The chain runs to 121 residues: MIGIDIIKISRMGALLERFGSKAMGRFLSKDEIELVKNHKTASGFWAAKEACSKALGVGIGAECGFHDITIFKSSNGAPNIRLSQKIVKEFNVKSISLSITHDGEYAIAVVTIESTAANKI.

Mg(2+)-binding residues include aspartate 5 and glutamate 50.

The protein belongs to the P-Pant transferase superfamily. AcpS family. Requires Mg(2+) as cofactor.

It is found in the cytoplasm. The enzyme catalyses apo-[ACP] + CoA = holo-[ACP] + adenosine 3',5'-bisphosphate + H(+). Its function is as follows. Transfers the 4'-phosphopantetheine moiety from coenzyme A to a Ser of acyl-carrier-protein. This Sulfurimonas denitrificans (strain ATCC 33889 / DSM 1251) (Thiomicrospira denitrificans (strain ATCC 33889 / DSM 1251)) protein is Holo-[acyl-carrier-protein] synthase.